A 73-amino-acid polypeptide reads, in one-letter code: MAKKDGVIEIEGSVIEALPNAMFRVELTNGHKVLAHISGKMRQHYIRILPEDRVIVELSPYDLTRGRIVYRYK.

Residues 1–73 (MAKKDGVIEI…TRGRIVYRYK (73 aa)) form the S1-like domain.

It belongs to the IF-1 family. Component of the 30S ribosomal translation pre-initiation complex which assembles on the 30S ribosome in the order IF-2 and IF-3, IF-1 and N-formylmethionyl-tRNA(fMet); mRNA recruitment can occur at any time during PIC assembly.

The protein resides in the cytoplasm. One of the essential components for the initiation of protein synthesis. Stabilizes the binding of IF-2 and IF-3 on the 30S subunit to which N-formylmethionyl-tRNA(fMet) subsequently binds. Helps modulate mRNA selection, yielding the 30S pre-initiation complex (PIC). Upon addition of the 50S ribosomal subunit IF-1, IF-2 and IF-3 are released leaving the mature 70S translation initiation complex. The protein is Translation initiation factor IF-1 of Leifsonia xyli subsp. xyli (strain CTCB07).